The primary structure comprises 685 residues: Threonine--tRNA ligase (685 aa).

The tract at residues 1 to 28 (MTSPAPEHSAAPLRVPAGTTAGTAVREA) is disordered. In terms of domain architecture, TGS spans 1-65 (MTSPAPEHSA…EVDVDVEPVA (65 aa)). The catalytic stretch occupies residues 262-568 (DHRKLGTELD…LTEHYAGAFP (307 aa)). The Zn(2+) site is built by Cys367, His418, and His545.

It belongs to the class-II aminoacyl-tRNA synthetase family. In terms of assembly, homodimer. Zn(2+) is required as a cofactor.

It is found in the cytoplasm. The catalysed reaction is tRNA(Thr) + L-threonine + ATP = L-threonyl-tRNA(Thr) + AMP + diphosphate + H(+). Catalyzes the attachment of threonine to tRNA(Thr) in a two-step reaction: L-threonine is first activated by ATP to form Thr-AMP and then transferred to the acceptor end of tRNA(Thr). Also edits incorrectly charged L-seryl-tRNA(Thr). In Rhodococcus erythropolis (strain PR4 / NBRC 100887), this protein is Threonine--tRNA ligase.